Consider the following 451-residue polypeptide: tRNA-2-methylthio-N(6)-dimethylallyladenosine synthase (451 aa).

An MTTase N-terminal domain is found at 18–134 (ARVYLETYGC…LPNLLDLAES (117 aa)). Residues cysteine 27, cysteine 63, cysteine 97, cysteine 170, cysteine 174, and cysteine 177 each contribute to the [4Fe-4S] cluster site. The Radical SAM core domain occupies 156–386 (RKNGHSAFLA…IALQQKISAE (231 aa)). Positions 389–451 (RNDIGNTHEV…TSATLIGNAL (63 aa)) constitute a TRAM domain.

The protein belongs to the methylthiotransferase family. MiaB subfamily. As to quaternary structure, monomer. The cofactor is [4Fe-4S] cluster.

It is found in the cytoplasm. The enzyme catalyses N(6)-dimethylallyladenosine(37) in tRNA + (sulfur carrier)-SH + AH2 + 2 S-adenosyl-L-methionine = 2-methylsulfanyl-N(6)-dimethylallyladenosine(37) in tRNA + (sulfur carrier)-H + 5'-deoxyadenosine + L-methionine + A + S-adenosyl-L-homocysteine + 2 H(+). Catalyzes the methylthiolation of N6-(dimethylallyl)adenosine (i(6)A), leading to the formation of 2-methylthio-N6-(dimethylallyl)adenosine (ms(2)i(6)A) at position 37 in tRNAs that read codons beginning with uridine. In Chloroherpeton thalassium (strain ATCC 35110 / GB-78), this protein is tRNA-2-methylthio-N(6)-dimethylallyladenosine synthase.